Consider the following 884-residue polypeptide: Probable disease resistance protein At1g12290 (884 aa).

Residues 26–66 adopt a coiled-coil conformation; it reads LYYIQNIKENLTSLEEAMEDLKALRDDLLRKVQTAEEGGLQ. The NB-ARC domain maps to 139–443; sequence AHPATRAVGE…CEGFIDGDEN (305 aa). Residue 182–189 coordinates ATP; it reads GMGGVGKT. LRR repeat units follow at residues 519–540, 541–563, 566–588, 590–612, 613–635, and 644–664; these read VVSR…PECP, KLTT…FFRS, RLVV…ISEL, SLRY…LKLK, KLMH…DHLS, and NLRM…ENLE.

Belongs to the disease resistance NB-LRR family.

In terms of biological role, probable disease resistance protein. This is Probable disease resistance protein At1g12290 from Arabidopsis thaliana (Mouse-ear cress).